Reading from the N-terminus, the 283-residue chain is Protein FAM78A (283 aa).

The protein belongs to the FAM78 family.

The protein is Protein FAM78A (Fam78a) of Mus musculus (Mouse).